We begin with the raw amino-acid sequence, 274 residues long: Large ribosomal subunit protein uL2 (274 aa).

Disordered regions lie at residues 28-54 and 224-274; these read APHA…TRHI and VAMN…RRRK. Positions 263–274 are enriched in basic and acidic residues; sequence KRTDKMIVRRRK.

It belongs to the universal ribosomal protein uL2 family. As to quaternary structure, part of the 50S ribosomal subunit. Forms a bridge to the 30S subunit in the 70S ribosome.

In terms of biological role, one of the primary rRNA binding proteins. Required for association of the 30S and 50S subunits to form the 70S ribosome, for tRNA binding and peptide bond formation. It has been suggested to have peptidyltransferase activity; this is somewhat controversial. Makes several contacts with the 16S rRNA in the 70S ribosome. The sequence is that of Large ribosomal subunit protein uL2 from Pseudomonas syringae pv. tomato (strain ATCC BAA-871 / DC3000).